Consider the following 387-residue polypeptide: Capsid protein (387 aa).

Residues 1–33 (MARTKSKPRKRTTVRKARRSVKRRTTTKGTKRK) show a composition bias toward basic residues. 2 disordered regions span residues 1–47 (MART…RGVA) and 365–387 (KSAK…REFN). Short sequence motifs (nuclear localization signal) lie at residues 8–15 (PRKRTTVR) and 30–37 (TKRKTAGD). Residues 370 to 379 (NDQLNNNQDA) show a composition bias toward low complexity.

Its subcellular location is the host nucleus. The protein localises to the virion. In terms of biological role, self-assembles to form the virion icosahedral capsid. This chain is Capsid protein, found in Chaetoceros protobacilladnavirus 2 (Chaetoceros sp. DNA virus 7).